The following is a 145-amino-acid chain: Transcription antitermination protein NusB (145 aa).

The protein belongs to the NusB family.

Its function is as follows. Involved in transcription antitermination. Required for transcription of ribosomal RNA (rRNA) genes. Binds specifically to the boxA antiterminator sequence of the ribosomal RNA (rrn) operons. The polypeptide is Transcription antitermination protein NusB (Aromatoleum aromaticum (strain DSM 19018 / LMG 30748 / EbN1) (Azoarcus sp. (strain EbN1))).